The chain runs to 165 residues: Large ribosomal subunit protein uL5 (165 aa).

Belongs to the universal ribosomal protein uL5 family. As to quaternary structure, part of the 50S ribosomal subunit; contacts the 5S rRNA and probably tRNA. Forms a bridge to the 30S subunit in the 70S ribosome.

Its function is as follows. This is one of the proteins that bind and probably mediate the attachment of the 5S RNA into the large ribosomal subunit, where it forms part of the central protuberance. In the 70S ribosome it contacts protein S13 of the 30S subunit (bridge B1b), connecting the 2 subunits; this bridge is implicated in subunit movement. May contact the P site tRNA; the 5S rRNA and some of its associated proteins might help stabilize positioning of ribosome-bound tRNAs. The protein is Large ribosomal subunit protein uL5 of Methanosarcina acetivorans (strain ATCC 35395 / DSM 2834 / JCM 12185 / C2A).